The sequence spans 387 residues: Small ribosomal subunit protein uS5m (387 aa).

The transit peptide at 1–22 (MLRSFSHFLQIGSRRQPTYFRC) directs the protein to the mitochondrion. A disordered region spans residues 33 to 87 (FKNDPKKELNSNLNEKSVEESSKNETKEQFNSSSIPRESESEGKTASNTSPLSPK). Over residues 48–60 (KSVEESSKNETKE) the composition is skewed to basic and acidic residues. The residue at position 85 (S85) is a Phosphoserine. The S5 DRBM domain occupies 225 to 288 (LMFVPLVRRR…GRAVKNMVYI (64 aa)).

It belongs to the universal ribosomal protein uS5 family. Component of the mitochondrial small ribosomal subunit (mt-SSU). Mature yeast 74S mitochondrial ribosomes consist of a small (37S) and a large (54S) subunit. The 37S small subunit contains a 15S ribosomal RNA (15S mt-rRNA) and at least 32 different proteins. The 54S large subunit contains a 21S rRNA (21S mt-rRNA) and at least 45 different proteins. uS3m, uS4m and uS5m form the narrow entry site of the mRNA channel.

Its subcellular location is the mitochondrion. In terms of biological role, component of the mitochondrial ribosome (mitoribosome), a dedicated translation machinery responsible for the synthesis of mitochondrial genome-encoded proteins, including at least some of the essential transmembrane subunits of the mitochondrial respiratory chain. The mitoribosomes are attached to the mitochondrial inner membrane and translation products are cotranslationally integrated into the membrane. In Schizosaccharomyces pombe (strain 972 / ATCC 24843) (Fission yeast), this protein is Small ribosomal subunit protein uS5m (mrp5).